The sequence spans 550 residues: Dihydroxy-acid dehydratase (550 aa).

Asp78 provides a ligand contact to Mg(2+). Cys119 is a [2Fe-2S] cluster binding site. Mg(2+)-binding residues include Asp120 and Lys121. Lys121 is modified (N6-carboxylysine). Position 191 (Cys191) interacts with [2Fe-2S] cluster. Glu440 is a binding site for Mg(2+). Ser466 functions as the Proton acceptor in the catalytic mechanism.

Belongs to the IlvD/Edd family. In terms of assembly, homodimer. [2Fe-2S] cluster is required as a cofactor. It depends on Mg(2+) as a cofactor.

The catalysed reaction is (2R)-2,3-dihydroxy-3-methylbutanoate = 3-methyl-2-oxobutanoate + H2O. It carries out the reaction (2R,3R)-2,3-dihydroxy-3-methylpentanoate = (S)-3-methyl-2-oxopentanoate + H2O. Its pathway is amino-acid biosynthesis; L-isoleucine biosynthesis; L-isoleucine from 2-oxobutanoate: step 3/4. The protein operates within amino-acid biosynthesis; L-valine biosynthesis; L-valine from pyruvate: step 3/4. Functions in the biosynthesis of branched-chain amino acids. Catalyzes the dehydration of (2R,3R)-2,3-dihydroxy-3-methylpentanoate (2,3-dihydroxy-3-methylvalerate) into 2-oxo-3-methylpentanoate (2-oxo-3-methylvalerate) and of (2R)-2,3-dihydroxy-3-methylbutanoate (2,3-dihydroxyisovalerate) into 2-oxo-3-methylbutanoate (2-oxoisovalerate), the penultimate precursor to L-isoleucine and L-valine, respectively. The protein is Dihydroxy-acid dehydratase of Methanococcus aeolicus (strain ATCC BAA-1280 / DSM 17508 / OCM 812 / Nankai-3).